The primary structure comprises 115 residues: MSAALLLATLLMTGLGQVAQKLTVEHWRLVAADGWTARLRSPWPWLALLALGLGLLCWLLLLQRVEVGSAYPMLALNFVLVTLAARFVFDEPVDRRHLAGLLLIVAGVVLLGRSA.

Helical transmembrane passes span 42-62, 65-85, and 93-112; these read PWPWLALLALGLGLLCWLLLL, VEVGSAYPMLALNFVLVTLAA, and VDRRHLAGLLLIVAGVVLLG. The 68-residue stretch at 46–113 folds into the EamA domain; sequence LALLALGLGL…IVAGVVLLGR (68 aa).

This sequence belongs to the ArnE family. As to quaternary structure, heterodimer of ArnE and ArnF.

The protein resides in the cell inner membrane. Its pathway is bacterial outer membrane biogenesis; lipopolysaccharide biosynthesis. Its function is as follows. Translocates 4-amino-4-deoxy-L-arabinose-phosphoundecaprenol (alpha-L-Ara4N-phosphoundecaprenol) from the cytoplasmic to the periplasmic side of the inner membrane. The sequence is that of Probable 4-amino-4-deoxy-L-arabinose-phosphoundecaprenol flippase subunit ArnE from Pseudomonas aeruginosa (strain UCBPP-PA14).